The following is a 141-amino-acid chain: Nucleoside diphosphate kinase (141 aa).

Residues K11, F59, R87, T93, R104, and N114 each contribute to the ATP site. The active-site Pros-phosphohistidine intermediate is the H117.

Belongs to the NDK family. As to quaternary structure, homotetramer. Requires Mg(2+) as cofactor.

It localises to the cytoplasm. The catalysed reaction is a 2'-deoxyribonucleoside 5'-diphosphate + ATP = a 2'-deoxyribonucleoside 5'-triphosphate + ADP. It catalyses the reaction a ribonucleoside 5'-diphosphate + ATP = a ribonucleoside 5'-triphosphate + ADP. Functionally, major role in the synthesis of nucleoside triphosphates other than ATP. The ATP gamma phosphate is transferred to the NDP beta phosphate via a ping-pong mechanism, using a phosphorylated active-site intermediate. In Methylibium petroleiphilum (strain ATCC BAA-1232 / LMG 22953 / PM1), this protein is Nucleoside diphosphate kinase.